A 60-amino-acid chain; its full sequence is Large ribosomal subunit protein bL32 (60 aa).

It belongs to the bacterial ribosomal protein bL32 family.

The protein is Large ribosomal subunit protein bL32 of Latilactobacillus sakei subsp. sakei (strain 23K) (Lactobacillus sakei subsp. sakei).